We begin with the raw amino-acid sequence, 1025 residues long: MSNGYSTDENFRYLISCFRARVKMYIQVEPVLDYLTFLPAEVKEQIQRTVATSGNMQAVELLLSTLEKGVWHLGWTREFVEALRRTGSPLAARYMNPELTDLPSPSFENAHDEYLQLLNLLQPTLVDKLLVRDVLDKCMEEELLTIEDRNRIAAAENNGNESGVRELLKRIVQKENWFSAFLNVLRQTGNNELVQELTGSDCSESNAEIENLSQVDGPQVEEQLLSTTVQPNLEKEVWGMENNSSESSFADSSVVSESDTSLAEGSVSCLDESLGHNSNMGSDSGTMGSDSDEENVAARASPEPELQLRPYQMEVAQPALEGKNIIICLPTGSGKTRVAVYIAKDHLDKKKKASEPGKVIVLVNKVLLVEQLFRKEFQPFLKKWYRVIGLSGDTQLKISFPEVVKSCDIIISTAQILENSLLNLENGEDAGVQLSDFSLIIIDECHHTNKEAVYNNIMRHYLMQKLKNNRLKKENKPVIPLPQILGLTASPGVGGATKQAKAEEHILKLCANLDAFTIKTVKENLDQLKNQIQEPCKKFAIADATREDPFKEKLLEIMTRIQTYCQMSPMSDFGTQPYEQWAIQMEKKAAKEGNRKERVCAEHLRKYNEALQINDTIRMIDAYTHLETFYNEEKDKKFAVIEDDSDEGGDDEYCDGDEDEDDLKKPLKLDETDRFLMTLFFENNKMLKRLAENPEYENEKLTKLRNTIMEQYTRTEESARGIIFTKTRQSAYALSQWITENEKFAEVGVKAHHLIGAGHSSEFKPMTQNEQKEVISKFRTGKINLLIATTVAEEGLDIKECNIVIRYGLVTNEIAMVQARGRARADESTYVLVAHSGSGVIEHETVNDFREKMMYKAIHCVQNMKPEEYAHKILELQMQSIMEKKMKTKRNIAKHYKNNPSLITFLCKNCSVLACSGEDIHVIEKMHHVNMTPEFKELYIVRENKALQKKCADYQINGEIICKCGQAWGTMMVHKGLDLPCLKIRNFVVVFKNNSTKKQYKKWVELPITFPNLDYSECCLFSDED.

2 CARD domains span residues 7-97 and 110-190; these read TDEN…YMNP and AHDE…QTGN. Glycyl lysine isopeptide (Lys-Gly) (interchain with G-Cter in ISG15) cross-links involve residues lysine 23 and lysine 43. Phosphoserine is present on serine 88. A disordered region spans residues 271–307; that stretch reads DESLGHNSNMGSDSGTMGSDSDEENVAARASPEPELQ. Over residues 277–289 the composition is skewed to low complexity; the sequence is NSNMGSDSGTMGS. 3 positions are modified to phosphoserine: serine 289, serine 291, and serine 301. The Helicase ATP-binding domain occupies 316–509; the sequence is AQPALEGKNI…AKAEEHILKL (194 aa). The interval 640 to 662 is disordered; that stretch reads VIEDDSDEGGDDEYCDGDEDEDD. Residues 641-661 are compositionally biased toward acidic residues; it reads IEDDSDEGGDDEYCDGDEDED. The residue at position 645 (serine 645) is a Phosphoserine. Residues 700-882 enclose the Helicase C-terminal domain; sequence KLTKLRNTIM…ILELQMQSIM (183 aa). Residue serine 828 is modified to Phosphoserine; by RIOK3. The 128-residue stretch at 893–1020 folds into the RLR CTR domain; it reads AKHYKNNPSL…PNLDYSECCL (128 aa). Residues cysteine 907, cysteine 910, cysteine 962, and cysteine 964 each contribute to the Zn(2+) site.

The protein belongs to the helicase family. RLR subfamily. In terms of assembly, monomer in the absence of ligands and homodimerizes in the presence of dsRNA ligands. Can assemble into helical or linear polymeric filaments on long dsRNA. Interacts with MAVS/IPS1. Interacts (via the CARD domains) with TKFC, the interaction is inhibited by viral infection. Interacts with PCBP2. Interacts with NLRC5. Interacts with PIAS2-beta. Interacts with DDX60. Interacts with ANKRD17. Interacts with IKBKE. Interacts with ATG5 and ATG12, either as ATG5 and ATG12 monomers or as ATG12-ATG5 conjugates. Interacts with ZCCHC3; leading to activate IFIH1/MDA5. Interacts with RNF123. Interacts with DDX3X. Interacts with NOD1; this interaction promotes transcription of antiviral genes and inhibition of viral replication. Interacts with ECSIT; this interaction bridges IFIH1 to the MAVS complex at the mitochondrion. As to quaternary structure, (Microbial infection) Interacts with V protein of paramyxoviruses; these interactions prevent IFN-beta induction, and subsequent establishment of an antiviral state. (Microbial infection) Interacts with herpes simplex virus 1 protein US11; this interaction prevents the interaction of MAVS/IPS1 to IFIH1. In terms of assembly, (Microbial infection) Interacts with Encephalomyocarditis virus protein 2C; this interaction inhibits the induction of the IFN-beta signal pathway. As to quaternary structure, (Microbial infection) Interacts with protease 3C of coxsackievirus A16; this interaction inhibits IFIH1 thereby attenuating type-I IFN production. (Microbial infection) Interacts with SARS-COV-2 virus protein NSP3; the interaction antagonizes ISG15-dependent IFIH1 activation via active de-ISGylation. In terms of assembly, (Microbial infection) Interacts with measles V protein; this interaction is involved in the inhibition of the host type I interferon signaling pathway by the virus. Sumoylated. Sumoylation positively regulates its role in type I interferon induction and is enhanced by PIAS2-beta. In terms of processing, ubiquitinated by RNF125, leading to its degradation by the proteasome. USP17/UPS17L2-dependent deubiquitination positively regulates the receptor. Ubiquitinated by TRIM25 via 'Lys-63'-linked ubiquitination, promoting activation of IFIH1/MDA5. Ubiquitinated by TRIM40 via 'Lys-48'-linked ubiquitination; leading to proteasomal degradation. Ubiquitinated by TRIM65 via 'Lys-63'-linked ubiquitination, promoting activation of IFIH1/MDA5. Post-translationally, ISGylated by ISG15. ISGylation increases upon infection with dengue (DENV) or Zika (ZIKV) viruses. ISGylation at Lys-23 and Lys-43 is dependent of dephosphorylation at Ser-88, regulates mitochondrial translocation and oligomerization. Essential for IFIH1/MDA5-mediated cytokine responses and restriction of virus replication. Phosphorylated at Ser-88. Dephosphorylated by phosphatases PPP11CA/PPP11CC; dephosphorylation precedes and is required for ISGylation. In terms of processing, during apoptosis, processed into 3 cleavage products. The helicase-containing fragment, once liberated from the CARD domains, translocate from the cytoplasm to the nucleus. The processed protein significantly sensitizes cells to DNA degradation. Post-translationally, (Microbial infection) Cleaved and inactivated by the protease 2A of coxsackievirus B3, poliovirus and enterovirus 71 allowing the virus to disrupt the host type I interferon production. In terms of tissue distribution, widely expressed, at a low level. Expression is detected at slightly highest levels in placenta, pancreas and spleen and at barely levels in detectable brain, testis and lung.

The protein resides in the cytoplasm. It localises to the nucleus. Its subcellular location is the mitochondrion. The enzyme catalyses ATP + H2O = ADP + phosphate + H(+). In terms of biological role, innate immune receptor which acts as a cytoplasmic sensor of viral nucleic acids and plays a major role in sensing viral infection and in the activation of a cascade of antiviral responses including the induction of type I interferons and pro-inflammatory cytokines. Its ligands include mRNA lacking 2'-O-methylation at their 5' cap and long-dsRNA (&gt;1 kb in length). Upon ligand binding it associates with mitochondria antiviral signaling protein (MAVS/IPS1) which activates the IKK-related kinases: TBK1 and IKBKE which phosphorylate interferon regulatory factors: IRF3 and IRF7 which in turn activate transcription of antiviral immunological genes, including interferons (IFNs); IFN-alpha and IFN-beta. Responsible for detecting the Picornaviridae family members such as encephalomyocarditis virus (EMCV), mengo encephalomyocarditis virus (ENMG), and rhinovirus. Detects coronavirus SARS-CoV-2. Can also detect other viruses such as dengue virus (DENV), west Nile virus (WNV), and reovirus. Also involved in antiviral signaling in response to viruses containing a dsDNA genome, such as vaccinia virus. Plays an important role in amplifying innate immune signaling through recognition of RNA metabolites that are produced during virus infection by ribonuclease L (RNase L). May play an important role in enhancing natural killer cell function and may be involved in growth inhibition and apoptosis in several tumor cell lines. In Homo sapiens (Human), this protein is Interferon-induced helicase C domain-containing protein 1.